The sequence spans 412 residues: UPF0754 membrane protein MAE_37850 (412 aa).

Transmembrane regions (helical) follow at residues 3–23 (LPTLWTWILPPIAGAIIGYFT) and 387–407 (IVNLGGILGLLVGLMQTIILI).

It belongs to the UPF0754 family.

It localises to the cell inner membrane. The protein is UPF0754 membrane protein MAE_37850 of Microcystis aeruginosa (strain NIES-843 / IAM M-2473).